Consider the following 559-residue polypeptide: Alpha-(1,6)-fucosyltransferase (559 aa).

Residues 1 to 4 (MLKC) lie on the Cytoplasmic side of the membrane. A helical; Signal-anchor for type II membrane protein membrane pass occupies residues 5–24 (IAAVGTVVWMTMFLFLYSQL). Residues 25-559 (SNNQSGGDSI…RKFKFEALLD (535 aa)) are Lumenal-facing. N27 carries N-linked (GlcNAc...) asparagine glycosylation. The span at 63–74 (QERNDQHKKIME) shows a compositional bias: basic and acidic residues. The tract at residues 63–90 (QERNDQHKKIMEQSHQLPPNPENPSLPK) is disordered. Positions 80–90 (PPNPENPSLPK) are enriched in pro residues. N134 carries N-linked (GlcNAc...) asparagine glycosylation. 3 cysteine pairs are disulfide-bonded: C188–C251, C196–C214, and C202–C206. One can recognise a GT23 domain in the interval 190–480 (EAKTLVCNLD…ADDGSKFHSL (291 aa)). The segment at 351–352 (RR) is important for donor substrate binding. An intrachain disulfide couples C452 to C459. The 62-residue stretch at 489 to 550 (QQAHEVIVIE…PSYKVVNDWR (62 aa)) folds into the SH3 domain.

The protein belongs to the glycosyltransferase 23 family. Mn(2+) serves as cofactor. Requires Mg(2+) as cofactor.

It localises to the golgi apparatus. The protein localises to the golgi stack membrane. It catalyses the reaction N(4)-{beta-D-GlcNAc-(1-&gt;2)-alpha-D-Man-(1-&gt;3)-[beta-D-GlcNAc-(1-&gt;2)-alpha-D-Man-(1-&gt;6)]-beta-D-Man-(1-&gt;4)-beta-D-GlcNAc-(1-&gt;4)-beta-D-GlcNAc}-L-asparaginyl-[protein] + GDP-beta-L-fucose = an N(4)-{beta-D-GlcNAc-(1-&gt;2)-alpha-D-Man-(1-&gt;3)-[beta-D-GlcNAc-(1-&gt;2)-alpha-D-Man-(1-&gt;6)]-beta-D-Man-(1-&gt;4)-beta-D-GlcNAc-(1-&gt;4)-[alpha-L-Fuc-(1-&gt;6)]-beta-D-GlcNAc}-L-asparaginyl-[protein] + GDP + H(+). The protein operates within protein modification; protein glycosylation. Inhibited by Fe(3+), Ni(2+) and Cu(2+). In terms of biological role, catalyzes the addition of fucose in alpha 1-6 linkage to the first GlcNAc residue, next to the peptide chains in N-glycans. The addition is prevented if the GlcNAc residue is already fucosylated. Involved in susceptibility to the nematotoxic C.cinerea galectin Cgl2, likely by contributing to the synthesis of core alpha-1,6-fucosylated N-glycans to which Cgl2 binds. The protein is Alpha-(1,6)-fucosyltransferase of Caenorhabditis elegans.